We begin with the raw amino-acid sequence, 788 residues long: Leucine-rich repeat and fibronectin type-III domain-containing protein 2 (788 aa).

A signal peptide spans 1–20 (METLLGGLLAFGMAFAVVDA). The LRRNT domain maps to 21–52 (CPKYCVCQNLSESLGTLCPSKGLLFVPPDIDR). At 21 to 534 (CPKYCVCQNL…MHSQILGGTM (514 aa)) the chain is on the extracellular side. N29 is a glycosylation site (N-linked (GlcNAc...) asparagine). 7 LRR repeats span residues 53–74 (RTVELRLGGNFIIHIGRQDFAN), 77–98 (GLVDLTLSRNTISHIQPFSFLD), 101–122 (SLRSLHLDSNRLPSLGEDTLRG), 125–146 (NLQHLIVNNNQLGGIADDAFED), 150–171 (TLEDLDLSYNNLHGLPWDSVRR), 174–195 (NLHQLSLDHNLLDHIAEGTFAD), and 198–219 (KLARLDLTSNRLQKLPPDPIFA). The LRRCT domain occupies 242–288 (NPLHCNCELLWLRRLERDDDLETCGSPGSLKGRYFWHIREEEFVCEP). The Ig-like domain occupies 289–375 (PLITQHTHKL…GEATATVEVS (87 aa)). C310 and C359 are oxidised to a cystine. 3 N-linked (GlcNAc...) asparagine glycosylation sites follow: N332, N341, and N384. Residues 383 to 423 (SNSTSRMAPPKSRLSDITGSSKTSRGGGGSGAGEPPKSTPE) are disordered. A Fibronectin type-III domain is found at 422–518 (PERAVLVSDV…GCAQFFTKAD (97 aa)). The chain crosses the membrane as a helical span at residues 535 to 555 (ILVIGGIIVATLLVFIVILMV). Residues 556 to 788 (RYKVCNHDTP…SSEWVMESTV (233 aa)) are Cytoplasmic-facing. Over residues 620–631 (CDSSSSSSLGSG) the composition is skewed to low complexity. 2 disordered regions span residues 620 to 655 (CDSSSSSSLGSGEAAGLGRGPWRLPPPAPRPKPSLD) and 668 to 711 (SQRK…RSLL). Residues 642 to 651 (RLPPPAPRPK) are compositionally biased toward pro residues. Positions 785–788 (ESTV) match the PDZ-binding motif.

The protein belongs to the LRFN family. As to quaternary structure, forms heteromeric complexes with LRFN1, LRFN3, LRFN4 and LRFN5. Can form homomeric complexes, but not across cell junctions. Interacts with DLG4. Directly interacts with DLG1, DLG2 and DLG3. Directly interacts with 2 NMDA receptor subunits GRIN1 and GRIN2A. Post-translationally, glycosylated. As to expression, predominantly expressed in the brain, with a weak, but broad expression in the cerebral cortex and diencephalic nuclei. Strongly expressed in both the pyramidal layer and the dentate gyrus of the hippocampus. Also detected in other parts of the central nervous system, including the olfactory bulb, pons, cerebellum, and medulla oblongata, as well as in the peripheral nervous system, such as the ganglia of cranial nerves and the dorsal root ganglion during gestation.

The protein localises to the membrane. It localises to the synapse. It is found in the postsynaptic cell membrane. Functionally, promotes neurite outgrowth in hippocampal neurons. Enhances the cell surface expression of 2 NMDA receptor subunits GRIN1 and GRIN2A. May play a role in redistributing DLG4 to the cell periphery. The protein is Leucine-rich repeat and fibronectin type-III domain-containing protein 2 (Lrfn2) of Mus musculus (Mouse).